Here is a 327-residue protein sequence, read N- to C-terminus: Interleukin-12 subunit beta (327 aa).

An N-terminal signal peptide occupies residues 1–22 (MHPQQLVVSWFSLVLLASPIVA). The Ig-like C2-type domain maps to 23 to 106 (IWELEKNVYI…LSRSLLLLHK (84 aa)). A disulfide bridge links Cys50 with Cys90. Residue Asn223 is glycosylated (N-linked (GlcNAc...) asparagine). A Fibronectin type-III domain is found at 238-327 (PPKNLQLRPL…WSEWASVSCS (90 aa)).

It belongs to the IL-12B family. As to quaternary structure, heterodimer with IL12A; disulfide-linked. The heterodimer is known as interleukin IL-12. Heterodimer with IL23A; disulfide-linked. The heterodimer is known as interleukin IL-23. Also secreted as a monomer. Interacts with NBR1; this interaction promotes IL-12 secretion.

It is found in the secreted. Its function is as follows. Cytokine that can act as a growth factor for activated T and NK cells, enhance the lytic activity of NK/lymphokine-activated killer cells, and stimulate the production of IFN-gamma by resting PBMC. The sequence is that of Interleukin-12 subunit beta (IL12B) from Bubalus carabanensis (Swamp type water buffalo).